The following is a 115-amino-acid chain: Probable non-functional T cell receptor beta variable 7-3 (115 aa).

The signal sequence occupies residues 1 to 21 (MGTRLLCWAALCLLGADHTGA). Residues 22–115 (GVSQTPSNKV…SAAYLRASSL (94 aa)) form the Ig-like domain.

In terms of assembly, most probably, the alpha-beta TR is not assembled due to incorrect folding of the beta chain. Alpha-beta TR is a heterodimer composed of an alpha and beta chain; disulfide-linked. The alpha-beta TR is associated with the transmembrane signaling CD3 coreceptor proteins to form the TR-CD3 (TcR or TCR). The assembly of alpha-beta TR heterodimers with CD3 occurs in the endoplasmic reticulum where a single alpha-beta TR heterodimer associates with one CD3D-CD3E heterodimer, one CD3G-CD3E heterodimer and one CD247 homodimer forming a stable octameric structure. CD3D-CD3E and CD3G-CD3E heterodimers preferentially associate with TR alpha and TR beta chains, respectively. The association of the CD247 homodimer is the last step of TcR assembly in the endoplasmic reticulum and is required for transport to the cell surface.

Its subcellular location is the cell membrane. Functionally, probable non-functional open reading frame (ORF) of V region of the variable domain of T cell receptor (TR) beta chain. Non-functional ORF generally cannot participate in the synthesis of a productive T cell receptor (TR) chain due to altered V-(D)-J or switch recombination and/or splicing site (at mRNA level) and/or conserved amino acid change (protein level). Alpha-beta T cell receptors are antigen specific receptors which are essential to the immune response and are present on the cell surface of T lymphocytes. Recognize peptide-major histocompatibility (MH) (pMH) complexes that are displayed by antigen presenting cells (APC), a prerequisite for efficient T cell adaptive immunity against pathogens. Binding of alpha-beta TR to pMH complex initiates TR-CD3 clustering on the cell surface and intracellular activation of LCK that phosphorylates the ITAM motifs of CD3G, CD3D, CD3E and CD247 enabling the recruitment of ZAP70. In turn ZAP70 phosphorylates LAT, which recruits numerous signaling molecules to form the LAT signalosome. The LAT signalosome propagates signal branching to three major signaling pathways, the calcium, the mitogen-activated protein kinase (MAPK) kinase and the nuclear factor NF-kappa-B (NF-kB) pathways, leading to the mobilization of transcription factors that are critical for gene expression and essential for T cell growth and differentiation. The T cell repertoire is generated in the thymus, by V-(D)-J rearrangement. This repertoire is then shaped by intrathymic selection events to generate a peripheral T cell pool of self-MH restricted, non-autoaggressive T cells. Post-thymic interaction of alpha-beta TR with the pMH complexes shapes TR structural and functional avidity. In Homo sapiens (Human), this protein is Probable non-functional T cell receptor beta variable 7-3.